The following is a 368-amino-acid chain: Alanine racemase (368 aa).

Lysine 40 (proton acceptor; specific for D-alanine) is an active-site residue. Lysine 40 is modified (N6-(pyridoxal phosphate)lysine). Arginine 134 contributes to the substrate binding site. Residue tyrosine 263 is the Proton acceptor; specific for L-alanine of the active site. Position 310 (methionine 310) interacts with substrate.

This sequence belongs to the alanine racemase family. It depends on pyridoxal 5'-phosphate as a cofactor.

The enzyme catalyses L-alanine = D-alanine. Its pathway is amino-acid biosynthesis; D-alanine biosynthesis; D-alanine from L-alanine: step 1/1. Catalyzes the interconversion of L-alanine and D-alanine. May also act on other amino acids. The protein is Alanine racemase (alr) of Listeria monocytogenes serotype 4b (strain CLIP80459).